A 384-amino-acid chain; its full sequence is D-galactosamine-6-phosphate deaminase AgaS (384 aa).

2 SIS domains span residues 45 to 197 (LEPL…SQTF) and 215 to 364 (SEGV…PDTP).

This sequence belongs to the SIS family. AgaS subfamily.

It catalyses the reaction D-galactosamine 6-phosphate + H2O = D-tagatopyranose 1-phosphate + NH4(+). In terms of biological role, catalyzes the isomerization-deamination of galactosamine 6-phosphate to form tagatofuranose 6-phosphate and ammonium ion. The sequence is that of D-galactosamine-6-phosphate deaminase AgaS from Escherichia coli.